The chain runs to 126 residues: Small ribosomal subunit protein uS13 (126 aa).

The disordered stretch occupies residues 98 to 126 (VRGQSTKNNARTRKGKRKTVANKKKAAKK). Residues 107–126 (ARTRKGKRKTVANKKKAAKK) show a composition bias toward basic residues.

The protein belongs to the universal ribosomal protein uS13 family. In terms of assembly, part of the 30S ribosomal subunit. Forms a loose heterodimer with protein S19. Forms two bridges to the 50S subunit in the 70S ribosome.

In terms of biological role, located at the top of the head of the 30S subunit, it contacts several helices of the 16S rRNA. In the 70S ribosome it contacts the 23S rRNA (bridge B1a) and protein L5 of the 50S subunit (bridge B1b), connecting the 2 subunits; these bridges are implicated in subunit movement. Contacts the tRNAs in the A and P-sites. The protein is Small ribosomal subunit protein uS13 of Amoebophilus asiaticus (strain 5a2).